Reading from the N-terminus, the 504-residue chain is Cytochrome P450 3A11 (504 aa).

Residue C443 coordinates heme.

The protein belongs to the cytochrome P450 family. Heme serves as cofactor. Highly expressed in liver.

It is found in the endoplasmic reticulum membrane. It localises to the microsome membrane. The catalysed reaction is an organic molecule + reduced [NADPH--hemoprotein reductase] + O2 = an alcohol + oxidized [NADPH--hemoprotein reductase] + H2O + H(+). Catalyzes erythromycin N-demethylation, nifedipine oxidation and testosterone 6 beta-hydroxylation. The chain is Cytochrome P450 3A11 (Cyp3a11) from Mus musculus (Mouse).